Consider the following 198-residue polypeptide: Alpha1-proteinase inhibitor-degradation deficient protein 37 (198 aa).

A Phosphoserine modification is found at Ser79.

Its subcellular location is the cytoplasm. Its function is as follows. Involved in ER-associated protein degradation (ERAD). The sequence is that of Alpha1-proteinase inhibitor-degradation deficient protein 37 (ADD37) from Saccharomyces cerevisiae (strain ATCC 204508 / S288c) (Baker's yeast).